The primary structure comprises 718 residues: MDQKSDNAGKCPVAHTVPKGRSNRDWWPDQLDVQVLHQHSGLSDPMGKAFNYAEEFKKLDLEELKKDLHALMTESQDWWPADFGHYGGLFIRMAWHSAGTYRITDGRGGAGQGQQRFAPLNSWPDNANLDKARRLLWPIKQKYGNRISWADLMILTGNVALESMGFQTFGFAGGRADVWEPQELFWGPEGTWLGDERYSGERQLDEPLAAVQMGLIYVNPEGPNGNPDPVAAAREIRETFARMAMNDEETVALIAGGHTFGKTHGAGDPSFIGPDPEGGAIEDQGLGWKSTFGTGVGKDAITGGPEVTWSQTPTRWSNYFFENLFNYEWELTKSPAGAHQWKAKNADASIPDAFDASKKHVPTMLTTDLSLRFDPIYEKISRRFLENPDQFADAFARAWFKLTHRDMGPKVRYLGPEVPAEDLIWQDVIPAVDHKLVDENDVADLKGKVLASGLSVQELVSTAWASASTFRGSDKRGGANGARIRLAPQKDWEVNQPAQLARVLSVLEGIQKDFNTAHTGGKKISLADLIVLAGAAGVEKAAKAGGHDITVPFTPGRADASEAQTDAASFAALEPRADGFRNYVSRRRRQFMKPEEALVDRAQLLTLTAPELTVLVGGLRVVFTSRPEVLTNDFFVNLLDMGTQWSPMAEKEGVYEGRDRKTHEVKWTGTRVDLIFGSHSQLRALAEVYASSDAKEKFVGDFVAAWTKVMNADRFDLV.

A disordered region spans residues 1-24 (MDQKSDNAGKCPVAHTVPKGRSNR). Residues 95–217 (WHSAGTYRIT…LAAVQMGLIY (123 aa)) constitute a cross-link (tryptophyl-tyrosyl-methioninium (Trp-Tyr) (with M-243)). Histidine 96 acts as the Proton acceptor in catalysis. The segment at residues 217-243 (YVNPEGPNGNPDPVAAAREIRETFARM) is a cross-link (tryptophyl-tyrosyl-methioninium (Tyr-Met) (with W-95)). Histidine 258 lines the heme b pocket.

The protein belongs to the peroxidase family. Peroxidase/catalase subfamily. As to quaternary structure, homodimer or homotetramer. Requires heme b as cofactor. Post-translationally, formation of the three residue Trp-Tyr-Met cross-link is important for the catalase, but not the peroxidase activity of the enzyme.

It catalyses the reaction H2O2 + AH2 = A + 2 H2O. The catalysed reaction is 2 H2O2 = O2 + 2 H2O. In terms of biological role, bifunctional enzyme with both catalase and broad-spectrum peroxidase activity. In Sinorhizobium fredii (strain NBRC 101917 / NGR234), this protein is Catalase-peroxidase.